Here is a 447-residue protein sequence, read N- to C-terminus: Dihydroorotase (447 aa).

Residues histidine 81 and histidine 83 each contribute to the Zn(2+) site. Residues 83–85 (HFR) and asparagine 115 contribute to the substrate site. Zn(2+) is bound by residues aspartate 171, histidine 198, and histidine 252. Asparagine 298 serves as a coordination point for substrate. Aspartate 325 lines the Zn(2+) pocket. Residue aspartate 325 is part of the active site. Substrate contacts are provided by residues histidine 329 and 343 to 344 (FG).

This sequence belongs to the metallo-dependent hydrolases superfamily. DHOase family. Class I DHOase subfamily. It depends on Zn(2+) as a cofactor.

It carries out the reaction (S)-dihydroorotate + H2O = N-carbamoyl-L-aspartate + H(+). It participates in pyrimidine metabolism; UMP biosynthesis via de novo pathway; (S)-dihydroorotate from bicarbonate: step 3/3. Catalyzes the reversible cyclization of carbamoyl aspartate to dihydroorotate. This chain is Dihydroorotase, found in Ehrlichia canis (strain Jake).